Here is a 335-residue protein sequence, read N- to C-terminus: Zinc transporter ZIP11 (335 aa).

7 helical membrane-spanning segments follow: residues leucine 12–phenylalanine 32, leucine 44–valine 64, glycine 72–valine 92, isoleucine 187–valine 207, phenylalanine 256–valine 278, valine 283–methionine 300, and leucine 315–glycine 335.

The protein belongs to the ZIP transporter (TC 2.A.5) family.

It is found in the cell membrane. The protein localises to the nucleus. The protein resides in the cytoplasm. Its subcellular location is the golgi apparatus. It carries out the reaction Zn(2+)(in) = Zn(2+)(out). The enzyme catalyses Cu(2+)(in) = Cu(2+)(out). Functionally, zinc importer that regulates cytosolic zinc concentrations either via zinc influx from the extracellular compartment or efflux from intracellular organelles such as Golgi apparatus. May transport copper ions as well. The transport mechanism remains to be elucidated. The protein is Zinc transporter ZIP11 (Slc39a11) of Rattus norvegicus (Rat).